Consider the following 123-residue polypeptide: UPF0231 protein PMI2039 (123 aa).

It belongs to the UPF0231 family.

The sequence is that of UPF0231 protein PMI2039 from Proteus mirabilis (strain HI4320).